The following is a 115-amino-acid chain: uncharacterized protein (115 aa).

The HTH arsR-type domain occupies 1–91 (MTEYNANSIR…SELEGFKNVS (91 aa)). The H-T-H motif DNA-binding region spans 30 to 53 (ASLISHTLLLSYATVLRHLRILND).

Its function is as follows. Essential for virus function. This is an uncharacterized protein from Saccharolobus solfataricus (Sulfolobus solfataricus).